The following is a 243-amino-acid chain: uncharacterized protein (243 aa).

An N-terminal signal peptide occupies residues 1–19 (MDELALSFSLTCLLPENRA). Asn-136 carries an N-linked (GlcNAc...) asparagine glycan.

Its subcellular location is the secreted. This is an uncharacterized protein from Homo sapiens (Human).